A 495-amino-acid polypeptide reads, in one-letter code: Trimethylamine methyltransferase MttB (495 aa).

Pyrrolysine 334 is a non-standard amino acid (pyrrolysine).

The protein belongs to the trimethylamine methyltransferase family. As to quaternary structure, can form a complex with MttC.

The catalysed reaction is Co(I)-[trimethylamine-specific corrinoid protein] + trimethylamine + H(+) = methyl-Co(III)-[trimethylamine-specific corrinoid protein] + dimethylamine. Its pathway is one-carbon metabolism; methanogenesis from trimethylamine. In terms of biological role, catalyzes the transfer of a methyl group from trimethylamine to the corrinoid cofactor of MttC. The protein is Trimethylamine methyltransferase MttB of Methanosarcina barkeri.